A 450-amino-acid chain; its full sequence is Probable cysteine desulfurase, mitochondrial (450 aa).

The transit peptide at M1 to I52 directs the protein to the mitochondrion. Pyridoxal 5'-phosphate contacts are provided by residues A120–T121, N200, Q228, and S248–H250. K251 carries the N6-(pyridoxal phosphate)lysine modification. T288 is a pyridoxal 5'-phosphate binding site. C374 (cysteine persulfide intermediate) is an active-site residue. Position 374 (C374) interacts with [2Fe-2S] cluster.

It belongs to the class-V pyridoxal-phosphate-dependent aminotransferase family. NifS/IscS subfamily. The cofactor is pyridoxal 5'-phosphate.

Its subcellular location is the mitochondrion. It is found in the nucleus. It catalyses the reaction (sulfur carrier)-H + L-cysteine = (sulfur carrier)-SH + L-alanine. Functionally, catalyzes the removal of elemental sulfur from cysteine to produce alanine. It supplies the inorganic sulfur for iron-sulfur (Fe-S) clusters. This is Probable cysteine desulfurase, mitochondrial (nfs1) from Dictyostelium discoideum (Social amoeba).